The primary structure comprises 524 residues: Rho guanine nucleotide exchange factor 3 (524 aa).

The interval 75 to 98 (SDSRPDLFSPRPWSRNTPAANTKR) is disordered. Residues 121–303 (IKRQEAIFEL…IQGIVAEINI (183 aa)) enclose the DH domain. In terms of domain architecture, PH spans 290–448 (AINIIQGIVA…QWLNCIRQAK (159 aa)).

It localises to the cytoplasm. Functionally, acts as a guanine nucleotide exchange factor (GEF) for RhoA and RhoB GTPases. This chain is Rho guanine nucleotide exchange factor 3 (Arhgef3), found in Gallus gallus (Chicken).